A 94-amino-acid chain; its full sequence is Putative pterin-4-alpha-carbinolamine dehydratase (94 aa).

Belongs to the pterin-4-alpha-carbinolamine dehydratase family.

It catalyses the reaction (4aS,6R)-4a-hydroxy-L-erythro-5,6,7,8-tetrahydrobiopterin = (6R)-L-erythro-6,7-dihydrobiopterin + H2O. This chain is Putative pterin-4-alpha-carbinolamine dehydratase, found in Mycobacteroides abscessus (strain ATCC 19977 / DSM 44196 / CCUG 20993 / CIP 104536 / JCM 13569 / NCTC 13031 / TMC 1543 / L948) (Mycobacterium abscessus).